We begin with the raw amino-acid sequence, 335 residues long: Mitochondrial amidoxime reducing component 2 (335 aa).

A mitochondrion-targeting transit peptide spans 1 to 35; that stretch reads MGASSSSALARLGLPARPWPRWLGVAALGLAAVAL. Glycyl lysine isopeptide (Lys-Gly) (interchain with G-Cter in ubiquitin) cross-links involve residues Lys59, Lys138, and Lys144. An N6-acetyllysine; alternate modification is found at Lys156. Lys156 is covalently cross-linked (Glycyl lysine isopeptide (Lys-Gly) (interchain with G-Cter in ubiquitin); alternate). Glycyl lysine isopeptide (Lys-Gly) (interchain with G-Cter in ubiquitin) cross-links involve residues Lys166, Lys173, Lys187, Lys287, and Lys294. The 147-residue stretch at 188-334 folds into the MOSC domain; sequence GRTSRKLLPT…LRVGDPVYRM (147 aa).

Component of a complex composed of cytochrome b5, NADH-cytochrome b5 reductase (CYB5R3) and MTARC2. Mo-molybdopterin is required as a cofactor. In terms of processing, ubiquitinated by PRKN during mitophagy, leading to its degradation and enhancement of mitophagy. Deubiquitinated by USP30.

It localises to the mitochondrion outer membrane. Its subcellular location is the peroxisome. The catalysed reaction is N(omega)-hydroxy-L-arginine + 2 Fe(II)-[cytochrome b5] + 2 H(+) = L-arginine + 2 Fe(III)-[cytochrome b5] + H2O. Its function is as follows. Catalyzes the reduction of N-oxygenated molecules, acting as a counterpart of cytochrome P450 and flavin-containing monooxygenases in metabolic cycles. As a component of prodrug-converting system, reduces a multitude of N-hydroxylated prodrugs particularly amidoximes, leading to increased drug bioavailability. May be involved in mitochondrial N(omega)-hydroxy-L-arginine (NOHA) reduction, regulating endogenous nitric oxide levels and biosynthesis. Postulated to cleave the N-OH bond of N-hydroxylated substrates in concert with electron transfer from NADH to cytochrome b5 reductase then to cytochrome b5, the ultimate electron donor that primes the active site for substrate reduction. The sequence is that of Mitochondrial amidoxime reducing component 2 from Homo sapiens (Human).